The sequence spans 798 residues: Type 2 DNA topoisomerase 6 subunit B (798 aa).

Residues Asn-60, Asp-91, 112-113, and 122-129 contribute to the ATP site; these read SR and GQQGIGIS. The segment covering 221–233 has biased composition (basic and acidic residues); sequence EPEDSFKSERATE. The interval 221–245 is disordered; that stretch reads EPEDSFKSERATEELPPETEEIRPH. Lys-629 contacts ATP.

The protein belongs to the TOP6B family. In terms of assembly, homodimer. Heterotetramer of two Top6A and two Top6B chains.

It carries out the reaction ATP-dependent breakage, passage and rejoining of double-stranded DNA.. Functionally, relaxes both positive and negative superturns and exhibits a strong decatenase activity. This chain is Type 2 DNA topoisomerase 6 subunit B, found in Natronomonas pharaonis (strain ATCC 35678 / DSM 2160 / CIP 103997 / JCM 8858 / NBRC 14720 / NCIMB 2260 / Gabara) (Halobacterium pharaonis).